The chain runs to 302 residues: Transmembrane protein 191 (302 aa).

Residues 5–147 (QEQLLQLQKD…HLELAEAKFS (143 aa)) are a coiled coil. Residues 39-66 (LTGRLEELRERERSLQRRRSQASRAIRG) are disordered. The segment covering 42–53 (RLEELRERERSL) has biased composition (basic and acidic residues). A helical membrane pass occupies residues 242–262 (LQTLLLLPLGFLVLPLIYVVL).

It belongs to the TMEM191 family.

The protein resides in the membrane. The chain is Transmembrane protein 191 from Mus musculus (Mouse).